A 253-amino-acid polypeptide reads, in one-letter code: MATAKTIDLTGRTVGEIELPAVFDADYRPDLIKKAVLAAQANRLQPYGPSLYAGMKTSATGWGSGRGVSHVPRLKNSSRAARVPHAKGGRRAHPPKPEADRSEKVNTKERRYAIRSAIAATIDPTLVNLRGHIFEAELPIVAVNDLENLERTKQVIEFLEAAGLYEDVLRAKYGRHIRAGRGKLRGRKYKHKKSVLIVAGENSPILKAARNLSGVDVVTVDSLNAELLAPGTHAGRLTVWTESAIGKLEGAFQ.

Residues 62–107 (WGSGRGVSHVPRLKNSSRAARVPHAKGGRRAHPPKPEADRSEKVNT) form a disordered region. The span at 82–94 (RVPHAKGGRRAHP) shows a compositional bias: basic residues. Residues 95–107 (PKPEADRSEKVNT) show a composition bias toward basic and acidic residues.

The protein belongs to the universal ribosomal protein uL4 family. In terms of assembly, part of the 50S ribosomal subunit.

Its function is as follows. One of the primary rRNA binding proteins, this protein initially binds near the 5'-end of the 23S rRNA. It is important during the early stages of 50S assembly. It makes multiple contacts with different domains of the 23S rRNA in the assembled 50S subunit and ribosome. Functionally, forms part of the polypeptide exit tunnel. This Methanosarcina mazei (strain ATCC BAA-159 / DSM 3647 / Goe1 / Go1 / JCM 11833 / OCM 88) (Methanosarcina frisia) protein is Large ribosomal subunit protein uL4.